A 402-amino-acid polypeptide reads, in one-letter code: Endo-polygalacturonase (402 aa).

An N-terminal signal peptide occupies residues 1–23 (MEYQSGKRVLSLSLGLIGLFSAS). Catalysis depends on aspartate 249, which acts as the Proton donor. Histidine 277 is a catalytic residue.

It belongs to the glycosyl hydrolase 28 family. Monomer.

It localises to the secreted. It catalyses the reaction (1,4-alpha-D-galacturonosyl)n+m + H2O = (1,4-alpha-D-galacturonosyl)n + (1,4-alpha-D-galacturonosyl)m.. Its function is as follows. Involved in maceration and soft-rotting of plant tissue. The sequence is that of Endo-polygalacturonase (peh) from Pectobacterium carotovorum subsp. carotovorum (Erwinia carotovora subsp. carotovora).